Reading from the N-terminus, the 147-residue chain is Transthyretin (147 aa).

An N-terminal signal peptide occupies residues 1–20 (MASLRLFLLCLAGLIFASEA). Cys30 bears the Sulfocysteine mark. Lys35 contributes to the L-thyroxine binding site. The residue at position 62 (Glu62) is a 4-carboxyglutamate. At Ser72 the chain carries Phosphoserine. Residue Glu74 participates in L-thyroxine binding. Asn118 carries an N-linked (GlcNAc...) asparagine glycan. Residue Ser137 participates in L-thyroxine binding.

This sequence belongs to the transthyretin family. As to quaternary structure, homotetramer. Dimer of dimers. In the homotetramer, subunits assemble around a central channel that can accommodate two ligand molecules. Interacts with RBP4. Sulfonation of the reactive cysteine Cys-30 enhances the stability of the native conformation of TTR, avoiding misassembly of the protein leading to amyloid formation. In terms of tissue distribution, detected in serum and cerebrospinal fluid (at protein level). Highly expressed in the choroid plexus. Detected at lower levels in the liver.

It is found in the secreted. Functionally, thyroid hormone-binding protein. Probably transports thyroxine from the bloodstream to the brain. This is Transthyretin (Ttr) from Rattus norvegicus (Rat).